The following is a 67-amino-acid chain: Sperm protamine P1 (67 aa).

A disordered region spans residues 1 to 67; it reads MASYRNSRSR…RRRKRNNENK (67 aa). Basic residues-rich tracts occupy residues 7–25 and 34–67; these read SRSR…RSRV and RSSR…NENK.

The protein belongs to the protamine P1 family. In terms of tissue distribution, testis.

It is found in the nucleus. Its subcellular location is the chromosome. In terms of biological role, protamines substitute for histones in the chromatin of sperm during the haploid phase of spermatogenesis. They compact sperm DNA into a highly condensed, stable and inactive complex. The polypeptide is Sperm protamine P1 (PRM1) (Isoodon macrourus (Short-nosed bandicoot)).